The following is an 871-amino-acid chain: DNA mismatch repair protein MutS (871 aa).

621 to 628 (GPNMAGKS) is a binding site for ATP.

Belongs to the DNA mismatch repair MutS family.

This protein is involved in the repair of mismatches in DNA. It is possible that it carries out the mismatch recognition step. This protein has a weak ATPase activity. The protein is DNA mismatch repair protein MutS of Geobacter sulfurreducens (strain ATCC 51573 / DSM 12127 / PCA).